The chain runs to 256 residues: Probable S-methyl-5'-thioinosine phosphorylase (256 aa).

Residues threonine 10 and arginine 47–histidine 48 each bind phosphate. Methionine 178 lines the substrate pocket. Threonine 179 lines the phosphate pocket. Asparagine 202 to alanine 204 provides a ligand contact to substrate.

This sequence belongs to the PNP/MTAP phosphorylase family. MTAP subfamily. In terms of assembly, homotrimer.

The enzyme catalyses S-methyl-5'-thioinosine + phosphate = 5-(methylsulfanyl)-alpha-D-ribose 1-phosphate + hypoxanthine. Its pathway is purine metabolism; purine nucleoside salvage. Catalyzes the reversible phosphorylation of S-methyl-5'-thioinosine (MTI) to hypoxanthine and 5-methylthioribose-1-phosphate. Involved in the breakdown of S-methyl-5'-thioadenosine (MTA), a major by-product of polyamine biosynthesis. Catabolism of (MTA) occurs via deamination to MTI and phosphorolysis to hypoxanthine. The protein is Probable S-methyl-5'-thioinosine phosphorylase of Methanopyrus kandleri (strain AV19 / DSM 6324 / JCM 9639 / NBRC 100938).